Here is a 158-residue protein sequence, read N- to C-terminus: NADPH-dependent 7-cyano-7-deazaguanine reductase (158 aa).

The active-site Thioimide intermediate is the Cys-56. The active-site Proton donor is Asp-63. Substrate contacts are provided by residues 78-80 (VES) and 97-98 (HE).

Belongs to the GTP cyclohydrolase I family. QueF type 1 subfamily.

It is found in the cytoplasm. The catalysed reaction is 7-aminomethyl-7-carbaguanine + 2 NADP(+) = 7-cyano-7-deazaguanine + 2 NADPH + 3 H(+). Its pathway is tRNA modification; tRNA-queuosine biosynthesis. In terms of biological role, catalyzes the NADPH-dependent reduction of 7-cyano-7-deazaguanine (preQ0) to 7-aminomethyl-7-deazaguanine (preQ1). This Rhodopseudomonas palustris (strain BisB5) protein is NADPH-dependent 7-cyano-7-deazaguanine reductase.